Consider the following 436-residue polypeptide: Ribulose bisphosphate carboxylase large chain (436 aa).

Residues Asn-104 and Thr-154 each coordinate substrate. Lys-156 acts as the Proton acceptor in catalysis. Substrate is bound at residue Lys-158. Positions 182, 184, and 185 each coordinate Mg(2+). An N6-carboxylysine modification is found at Lys-182. The active-site Proton acceptor is the His-275. Positions 276, 308, and 360 each coordinate substrate.

The protein belongs to the RuBisCO large chain family. Type I subfamily. Heterohexadecamer of 8 large chains and 8 small chains. Mg(2+) is required as a cofactor.

It localises to the plastid. It is found in the chloroplast. The enzyme catalyses 2 (2R)-3-phosphoglycerate + 2 H(+) = D-ribulose 1,5-bisphosphate + CO2 + H2O. The catalysed reaction is D-ribulose 1,5-bisphosphate + O2 = 2-phosphoglycolate + (2R)-3-phosphoglycerate + 2 H(+). In terms of biological role, ruBisCO catalyzes two reactions: the carboxylation of D-ribulose 1,5-bisphosphate, the primary event in carbon dioxide fixation, as well as the oxidative fragmentation of the pentose substrate in the photorespiration process. Both reactions occur simultaneously and in competition at the same active site. The sequence is that of Ribulose bisphosphate carboxylase large chain from Euglena myxocylindracea.